The following is a 180-amino-acid chain: UPF0340 protein llmg_0465 (180 aa).

Belongs to the UPF0340 family.

The chain is UPF0340 protein llmg_0465 from Lactococcus lactis subsp. cremoris (strain MG1363).